A 566-amino-acid polypeptide reads, in one-letter code: Acyl-CoA synthetase ALT10 (566 aa).

Residue 196–207 (MLFTSGTTGAPK) participates in AMP binding. The interval 473-551 (EVEHAALSHE…DAVHYNRTGK (79 aa)) is AMP-binding.

This sequence belongs to the ATP-dependent AMP-binding enzyme family.

It functions in the pathway mycotoxin biosynthesis. Its function is as follows. Acyl-CoA synthetase; part of the gene cluster that mediates the biosynthesis of the host-selective toxins (HSTs) AAL-toxins, sphinganine-analog mycotoxins responsible for Alternaria stem canker on tomato by the tomato pathotype. The biosynthesis starts with the polyketide synthase ALT1-catalyzed C-16 carbon chain assembly from one starter acetyl-CoA unit with malonyl-CoA extender units. ALT1 also selectively transfers methyl groups at the first and the third cycle of chain elongation for AAL toxin. The C-16 polyketide chain is released from the enzyme by a nucleophilic attack of a carbanion, which is derived from R-carbon of glycin by decarboxylation, on the carbonyl carbon of polyketide acyl chain. This step is probably catalyzed by a pyridoxal 5'-phosphate-dependent aminoacyl transferase ALT4. The respective functions of the other enzymes encoded by the cluster have still to be elucidated. The sphingosine N-acyltransferase-like protein ALT7 seems not to act as a resistance/self-tolerance factor against the toxin in the toxin biosynthetic gene cluster, contrary to what is expected. The protein is Acyl-CoA synthetase ALT10 of Alternaria alternata (Alternaria rot fungus).